Consider the following 98-residue polypeptide: Protein S100-A11 (98 aa).

Threonine 5 is subject to Phosphothreonine. EF-hand domains follow at residues 12–47 (LIAV…AFTK) and 50–85 (KDPG…LAIA). Residue lysine 22 is modified to N6-acetyllysine. 8 residues coordinate Ca(2+): serine 26, histidine 28, glutamate 33, aspartate 63, asparagine 65, aspartate 67, glutamine 69, and glutamate 74.

This sequence belongs to the S-100 family. As to quaternary structure, homodimer; disulfide-linked. Post-translationally, phosphorylation at Thr-5 significantly suppresses homodimerization and promotes association with NCL/nucleolin which induces nuclear translocation.

It is found in the cytoplasm. It localises to the nucleus. Its function is as follows. Facilitates the differentiation and the cornification of keratinocytes. The sequence is that of Protein S100-A11 (S100a11) from Rattus norvegicus (Rat).